Here is a 478-residue protein sequence, read N- to C-terminus: UDP-N-acetylmuramate--L-alanine ligase (478 aa).

120–126 (GSHGKTT) is a binding site for ATP.

Belongs to the MurCDEF family.

Its subcellular location is the cytoplasm. The enzyme catalyses UDP-N-acetyl-alpha-D-muramate + L-alanine + ATP = UDP-N-acetyl-alpha-D-muramoyl-L-alanine + ADP + phosphate + H(+). The protein operates within cell wall biogenesis; peptidoglycan biosynthesis. In terms of biological role, cell wall formation. The protein is UDP-N-acetylmuramate--L-alanine ligase of Rickettsia felis (strain ATCC VR-1525 / URRWXCal2) (Rickettsia azadi).